Here is a 97-residue protein sequence, read N- to C-terminus: Mapk-regulated corepressor-interacting protein 1 (97 aa).

Residues 1–30 (MTSSPVSRVVYNGKRTSSPRSPPSSSEIFT) form a disordered region. Phosphoserine occurs at positions 21 and 24. Position 30 is a phosphothreonine (Thr-30). Tyr-41 carries the phosphotyrosine modification. The residue at position 79 (Lys-79) is an N6-acetyllysine. Residues 80 to 84 (PIDLS) carry the PXDLS motif motif.

Belongs to the MCRIP family. As to quaternary structure, interacts (unphosphorylated form, via the PXDLS motif) with CTBP1, competitively inhibiting CTBP-ZEB1 interaction. Interacts with CTBP2. Interacts with MCRIP2. Interacts with DDX6. Post-translationally, phosphorylation by MAPK3/1 (ERK1/2) regulates MCRIP1 binding to CTBP(s).

It localises to the nucleus. It is found in the cytoplasm. Its subcellular location is the stress granule. The phosphorylation status of MCRIP1 functions as a molecular switch to regulate epithelial-mesenchymal transition. Unphosphorylated MCRIP1 binds to and inhibits the transcriptional corepressor CTBP(s). When phosphorylated by MAPK/ERK, MCRIP1 releases CTBP(s) resulting in transcriptional silencing of the E-cadherin gene and induction of epithelial-mesenchymal transition. This Homo sapiens (Human) protein is Mapk-regulated corepressor-interacting protein 1.